A 1736-amino-acid chain; its full sequence is Hybrid signal transduction histidine kinase I (1736 aa).

Low complexity predominate over residues 143–161 (HNINNNQNNQNSVNINSSN). Positions 143 to 171 (HNINNNQNNQNSVNINSSNKGQYNRPEPS) are disordered. Residues 234–286 (FEYPLRINRKNDNLVRYIQLKGEIIKKDDKVFKVLGVCHDFSEIQEAKDKLEE) form the PAC domain. Residues 287–358 (ESKFVEALIG…QINLEKSGTP (72 aa)) form the PAS domain. The tract at residues 378–469 (TSNQQQSSLS…NTTNGIGGAT (92 aa)) is disordered. Over residues 379–389 (SNQQQSSLSKS) the composition is skewed to low complexity. Residues 392-412 (PRSQSNCSNGNKSQNRLSKNY) show a composition bias toward polar residues. The segment covering 413 to 469 (STTTTTTNNNNNNNNNNNNNNNNNNNNNSISQQQQTQVSTQQTQQQQNTTNGIGGAT) has biased composition (low complexity). The Histidine kinase domain maps to 556–908 (NISHELLSPM…TFHFILSIKS (353 aa)). The residue at position 559 (His559) is a Phosphohistidine; by autocatalysis. Disordered stretches follow at residues 711-821 (NSKT…KREK), 952-971 (TKKV…TNYG), 1080-1124 (NGNN…KQHS), 1157-1258 (PPKS…ILSP), 1277-1301 (SLTP…INNG), 1330-1393 (ASSP…NLSS), and 1419-1520 (SNNL…PPIL). Acidic residues-rich tracts occupy residues 725–735 (SIDGDYDDQDN) and 758–789 (ELDE…DDDT). Low complexity-rich tracts occupy residues 790–807 (SSNT…FHNN), 961–971 (DNGNNDSTNYG), and 1080–1096 (NGNN…NNNI). Over residues 1097–1117 (QTPNGLNNSRGSSLISTPSTK) the composition is skewed to polar residues. 2 stretches are compositionally biased toward low complexity: residues 1186 to 1195 (SSPPINSSSS) and 1202 to 1258 (TNGS…ILSP). Residues 1330-1339 (ASSPKQSQRG) show a composition bias toward polar residues. Low complexity-rich tracts occupy residues 1340 to 1376 (YSPK…QQQQ), 1425 to 1475 (NNNN…STPE), 1482 to 1492 (SPRSNNNNNCS), and 1506 to 1520 (SSTI…PPIL). The 124-residue stretch at 1551–1674 (KVLVAEDNTM…LLYEVINTQI (124 aa)) folds into the Response regulatory domain. Position 1605 is a 4-aspartylphosphate (Asp1605). Low complexity predominate over residues 1695 to 1722 (NNNNNNTNNNNNNNNSSNPVNNNNSNSI). Residues 1695–1736 (NNNNNNTNNNNNNNNSSNPVNNNNSNSIDATQQELNNEKIRI) form a disordered region.

Activation probably requires transfer of a phosphate group between a histidine in the kinase core (transmitter) domain and an aspartate of the receiver domain.

The catalysed reaction is ATP + protein L-histidine = ADP + protein N-phospho-L-histidine.. Acts as a receptor histidine kinase for a signal transduction pathway. This protein undergoes an ATP-dependent autophosphorylation at a conserved histidine residue in the kinase core, and a phosphoryl group is then transferred to a conserved aspartate residue in the receiver domain. This is Hybrid signal transduction histidine kinase I (dhkI-1) from Dictyostelium discoideum (Social amoeba).